The following is a 174-amino-acid chain: UPF0340 protein SAB1998c (174 aa).

This sequence belongs to the UPF0340 family.

The sequence is that of UPF0340 protein SAB1998c from Staphylococcus aureus (strain bovine RF122 / ET3-1).